Consider the following 91-residue polypeptide: UPF0250 protein Psyr_4360 (91 aa).

Belongs to the UPF0250 family.

In Pseudomonas syringae pv. syringae (strain B728a), this protein is UPF0250 protein Psyr_4360.